We begin with the raw amino-acid sequence, 752 residues long: Polyribonucleotide nucleotidyltransferase (752 aa).

Asp529 and Asp535 together coordinate Mg(2+). In terms of domain architecture, KH spans 595 to 654; it reads PRVTTIKVPVDKIGEVIGPKGKVINAITEETGAQISIEDDGTVFVGATDGPSAQAAIDKI. The S1 motif domain occupies 666–735; the sequence is GERFLGTVVK…KRGKISLILV (70 aa).

It belongs to the polyribonucleotide nucleotidyltransferase family. Mg(2+) is required as a cofactor.

The protein resides in the cytoplasm. The enzyme catalyses RNA(n+1) + phosphate = RNA(n) + a ribonucleoside 5'-diphosphate. Involved in mRNA degradation. Catalyzes the phosphorolysis of single-stranded polyribonucleotides processively in the 3'- to 5'-direction. This Mycobacterium tuberculosis (strain ATCC 25177 / H37Ra) protein is Polyribonucleotide nucleotidyltransferase.